Reading from the N-terminus, the 383-residue chain is Succinyl-diaminopimelate desuccinylase (383 aa).

His73 is a binding site for Zn(2+). Asp75 is an active-site residue. Asp107 contacts Zn(2+). Residue Glu141 is the Proton acceptor of the active site. Zn(2+) contacts are provided by Glu142, Glu170, and His356.

Belongs to the peptidase M20A family. DapE subfamily. As to quaternary structure, homodimer. Zn(2+) is required as a cofactor. Requires Co(2+) as cofactor.

It catalyses the reaction N-succinyl-(2S,6S)-2,6-diaminopimelate + H2O = (2S,6S)-2,6-diaminopimelate + succinate. It participates in amino-acid biosynthesis; L-lysine biosynthesis via DAP pathway; LL-2,6-diaminopimelate from (S)-tetrahydrodipicolinate (succinylase route): step 3/3. In terms of biological role, catalyzes the hydrolysis of N-succinyl-L,L-diaminopimelic acid (SDAP), forming succinate and LL-2,6-diaminopimelate (DAP), an intermediate involved in the bacterial biosynthesis of lysine and meso-diaminopimelic acid, an essential component of bacterial cell walls. The sequence is that of Succinyl-diaminopimelate desuccinylase from Pseudomonas putida (strain W619).